Here is a 178-residue protein sequence, read N- to C-terminus: Cell division protein ZapC (178 aa).

This sequence belongs to the ZapC family. Interacts directly with FtsZ.

Its subcellular location is the cytoplasm. In terms of biological role, contributes to the efficiency of the cell division process by stabilizing the polymeric form of the cell division protein FtsZ. Acts by promoting interactions between FtsZ protofilaments and suppressing the GTPase activity of FtsZ. The chain is Cell division protein ZapC from Pseudoalteromonas atlantica (strain T6c / ATCC BAA-1087).